A 363-amino-acid polypeptide reads, in one-letter code: Serpentine receptor class beta-17 (363 aa).

Transmembrane regions (helical) follow at residues 46 to 66 (AFLL…GSII), 75 to 95 (LLAF…SCFL), 120 to 140 (VILA…SMLC), 169 to 189 (IGFV…LYMY), 214 to 234 (YIFI…IGLY), 273 to 293 (CAQL…RIFL), and 304 to 324 (VTEF…ICIV).

It belongs to the nematode receptor-like protein srb family.

The protein resides in the membrane. In Caenorhabditis elegans, this protein is Serpentine receptor class beta-17 (srb-17).